We begin with the raw amino-acid sequence, 285 residues long: Octanoyltransferase (285 aa).

The 228-residue stretch at 50 to 277 (LRTPDELWIV…NIAQRHAGDI (228 aa)) folds into the BPL/LPL catalytic domain. Substrate contacts are provided by residues 89–96 (RGGQVTWH), 189–191 (SLG), and 202–204 (GIA). Residue Cys220 is the Acyl-thioester intermediate of the active site.

This sequence belongs to the LipB family.

The protein localises to the cytoplasm. The catalysed reaction is octanoyl-[ACP] + L-lysyl-[protein] = N(6)-octanoyl-L-lysyl-[protein] + holo-[ACP] + H(+). It participates in protein modification; protein lipoylation via endogenous pathway; protein N(6)-(lipoyl)lysine from octanoyl-[acyl-carrier-protein]: step 1/2. Its function is as follows. Catalyzes the transfer of endogenously produced octanoic acid from octanoyl-acyl-carrier-protein onto the lipoyl domains of lipoate-dependent enzymes. Lipoyl-ACP can also act as a substrate although octanoyl-ACP is likely to be the physiological substrate. This is Octanoyltransferase from Psychrobacter cryohalolentis (strain ATCC BAA-1226 / DSM 17306 / VKM B-2378 / K5).